The following is a 927-amino-acid chain: Phospholipase D beta 2 (927 aa).

One can recognise a C2 domain in the interval P104–Y237. A Ca(2+)-binding site is contributed by D299. One can recognise a PLD phosphodiesterase 1 domain in the interval T439–R474. Catalysis depends on residues H444, K446, and D451. Residue H444 participates in a 1,2-diacyl-sn-glycero-3-phosphate binding. The Ca(2+) site is built by H480 and H512. A 1,2-diacyl-sn-glycero-3-phosphate-binding residues include Q640 and H778. In terms of domain architecture, PLD phosphodiesterase 2 spans F773–S800. Active-site residues include H778, K780, and D785. E841 lines the Ca(2+) pocket.

The protein belongs to the phospholipase D family. C2-PLD subfamily. Ca(2+) is required as a cofactor. In terms of tissue distribution, expressed in stems, and to a lower amount in leaves, flowers and siliques.

The protein resides in the cytoplasm. It localises to the membrane. It carries out the reaction a 1,2-diacyl-sn-glycero-3-phosphocholine + H2O = a 1,2-diacyl-sn-glycero-3-phosphate + choline + H(+). With respect to regulation, inhibited by neomycin. Its function is as follows. Hydrolyzes glycerol-phospholipids at the terminal phosphodiesteric bond to generate phosphatidic acids (PA). Plays an important role in various cellular processes, including phytohormone action, vesicular trafficking, secretion, cytoskeletal arrangement, meiosis, tumor promotion, pathogenesis, membrane deterioration and senescence. Can use phosphatidylserine or N-acylphosphatidylethanolamine as substrates. The protein is Phospholipase D beta 2 of Arabidopsis thaliana (Mouse-ear cress).